Consider the following 180-residue polypeptide: MAQRFKELYLQTIVPKLKDEFGYKNSHQVPEIKKIVINRGLGDASQNAKILDSSLNELSIIAGQRGVVTRSKKAIAGFKLRDKMAVGISVTLRGDRMYSFLDRLINLALPRIRDFQGISPKSFDGCGNYSLGLEEQLMFPEIDYDKIDQVRGMDISIVTTCSNNEEGVALLKNFGMPFKA.

It belongs to the universal ribosomal protein uL5 family. In terms of assembly, part of the 50S ribosomal subunit; contacts the 5S rRNA.

The protein localises to the plastid. It is found in the chloroplast. Binds 5S rRNA, forms part of the central protuberance of the 50S subunit. This is Large ribosomal subunit protein uL5c (rpl5) from Oltmannsiellopsis viridis (Marine flagellate).